Consider the following 798-residue polypeptide: Cold shock domain-containing protein E1 (798 aa).

The region spanning 26–87 (ETGVIEKLLT…RTGKPIAIKL (62 aa)) is the CSD 1 domain. At lysine 81 the chain carries N6-acetyllysine. Lysine 91 participates in a covalent cross-link: Glycyl lysine isopeptide (Lys-Gly) (interchain with G-Cter in SUMO2). Serine 123 is modified (phosphoserine). Residues 136-179 (VFYLTYTSEDVEGNVQLETGDKINFVIDNNKHTGAVSARNIMLL) form the CSD 2; truncated domain. The CSD 3 domain occupies 186 to 245 (CQGVVCAMKEAFGFIERGDVVKEIFFHYSEFKGDLETLQPGDDVEFTIKDRNGKEVATDV). Serine 276 carries the phosphoserine modification. The 41-residue stretch at 297–337 (LPFGDKDTKSKVTLLEGDHVRFNISTDRRDKLERATNIEVL) folds into the CSD 4; truncated domain. 2 CSD domains span residues 349–410 (EMGV…AIRI) and 447–507 (NKGK…ATCV). Serine 514 carries the post-translational modification Phosphoserine. The CSD 7 domain maps to 519 to 579 (LLGYVATLKD…KGNKVSAEKV (61 aa)). Position 584 is a phosphoserine (serine 584). 2 CSD domains span residues 610 to 670 (PTQI…AYNI) and 674 to 735 (RRAT…ACNV). In terms of domain architecture, SUZ-C spans 748-789 (PRPDRLVNRLKNITLDDASAPRLMVLRQPRGPDNSMGFGAER). Threonine 761 carries the post-translational modification Phosphothreonine.

The protein belongs to the UNR family. As to quaternary structure, component of a multi subunit autoregulatory ribonucleoprotein complex (ARC), at least composed of IGF2BP1, PABPC1 and CSDE1. Interacts with STRAP. Part of a complex associated with the FOS mCRD domain and consisting of PABPC1, PAIP1, HNRPD and SYNCRIP. The interaction with PABPC1 is direct and RNA-independent. Interacts with EIF4ENIF1/4E-T.

The protein localises to the cytoplasm. It localises to the stress granule. It is found in the P-body. In terms of biological role, RNA-binding protein involved in translationally coupled mRNA turnover. Implicated with other RNA-binding proteins in the cytoplasmic deadenylation/translational and decay interplay of the FOS mRNA mediated by the major coding-region determinant of instability (mCRD) domain. Required for efficient formation of stress granules. This chain is Cold shock domain-containing protein E1, found in Mus musculus (Mouse).